A 491-amino-acid polypeptide reads, in one-letter code: Probable glycine dehydrogenase (decarboxylating) subunit 2 (491 aa).

Position 273 is an N6-(pyridoxal phosphate)lysine (Lys273).

The protein belongs to the GcvP family. C-terminal subunit subfamily. The glycine cleavage system is composed of four proteins: P, T, L and H. In this organism, the P 'protein' is a heterodimer of two subunits. Requires pyridoxal 5'-phosphate as cofactor.

The enzyme catalyses N(6)-[(R)-lipoyl]-L-lysyl-[glycine-cleavage complex H protein] + glycine + H(+) = N(6)-[(R)-S(8)-aminomethyldihydrolipoyl]-L-lysyl-[glycine-cleavage complex H protein] + CO2. In terms of biological role, the glycine cleavage system catalyzes the degradation of glycine. The P protein binds the alpha-amino group of glycine through its pyridoxal phosphate cofactor; CO(2) is released and the remaining methylamine moiety is then transferred to the lipoamide cofactor of the H protein. The polypeptide is Probable glycine dehydrogenase (decarboxylating) subunit 2 (Bacillus thuringiensis (strain Al Hakam)).